The following is a 116-amino-acid chain: Phosphoribosyl-ATP pyrophosphatase (116 aa).

Belongs to the PRA-PH family.

Its subcellular location is the cytoplasm. It carries out the reaction 1-(5-phospho-beta-D-ribosyl)-ATP + H2O = 1-(5-phospho-beta-D-ribosyl)-5'-AMP + diphosphate + H(+). It participates in amino-acid biosynthesis; L-histidine biosynthesis; L-histidine from 5-phospho-alpha-D-ribose 1-diphosphate: step 2/9. This Nitrobacter winogradskyi (strain ATCC 25391 / DSM 10237 / CIP 104748 / NCIMB 11846 / Nb-255) protein is Phosphoribosyl-ATP pyrophosphatase.